The sequence spans 415 residues: Mitogen-activated protein kinase MPS1 (415 aa).

A Protein kinase domain is found at 23-314 (YTVTKELGQG…VEQALEHPYL (292 aa)). Residues 29-37 (LGQGAYGIV) and Lys-52 each bind ATP. Positions 363–394 (GAGGHGAPHAPQVPIPAGAGQGQWKAEDPRPQ) are disordered.

This sequence belongs to the protein kinase superfamily. Ser/Thr protein kinase family. MAP kinase subfamily. In terms of assembly, interacts with transcription factor MIG1. Interacts with transcription factor SWI6. Mg(2+) serves as cofactor.

The enzyme catalyses L-seryl-[protein] + ATP = O-phospho-L-seryl-[protein] + ADP + H(+). It carries out the reaction L-threonyl-[protein] + ATP = O-phospho-L-threonyl-[protein] + ADP + H(+). In terms of biological role, mitogen-activated protein kinase; part of the MCK1-MKK2-MPS1 MAP kinase (MAPK) signal transduction cascade that is essential for cell wall integrity and plant infection, but not for plant defense responses. Beside its role in pathogenesis, the MPS1 cascade is active in conidiation and cellular stress responses. Targets downstream of the MPS1-MAPK pathway include transcription factors MIG1 and SWI6, as well as GSK1 and MPG1. This chain is Mitogen-activated protein kinase MPS1, found in Pyricularia oryzae (strain 70-15 / ATCC MYA-4617 / FGSC 8958) (Rice blast fungus).